The following is a 143-amino-acid chain: Large ribosomal subunit protein uL11 (143 aa).

Belongs to the universal ribosomal protein uL11 family. As to quaternary structure, part of the ribosomal stalk of the 50S ribosomal subunit. Interacts with L10 and the large rRNA to form the base of the stalk. L10 forms an elongated spine to which L12 dimers bind in a sequential fashion forming a multimeric L10(L12)X complex. Post-translationally, one or more lysine residues are methylated.

Its function is as follows. Forms part of the ribosomal stalk which helps the ribosome interact with GTP-bound translation factors. The polypeptide is Large ribosomal subunit protein uL11 (Methylococcus capsulatus (strain ATCC 33009 / NCIMB 11132 / Bath)).